The sequence spans 207 residues: LexA repressor (207 aa).

The H-T-H motif DNA-binding region spans 28-48; it reads VREIGEAVGLASSSTVHGHLA. Active-site for autocatalytic cleavage activity residues include Ser129 and Lys167.

It belongs to the peptidase S24 family. As to quaternary structure, homodimer.

The catalysed reaction is Hydrolysis of Ala-|-Gly bond in repressor LexA.. Represses a number of genes involved in the response to DNA damage (SOS response), including recA and lexA. In the presence of single-stranded DNA, RecA interacts with LexA causing an autocatalytic cleavage which disrupts the DNA-binding part of LexA, leading to derepression of the SOS regulon and eventually DNA repair. In Bacillus licheniformis (strain ATCC 14580 / DSM 13 / JCM 2505 / CCUG 7422 / NBRC 12200 / NCIMB 9375 / NCTC 10341 / NRRL NRS-1264 / Gibson 46), this protein is LexA repressor.